Reading from the N-terminus, the 106-residue chain is ATP-dependent Clp protease adapter protein ClpS (106 aa).

A disordered region spans residues 1-22 (MTDEPNQDDPQGPEVEAAKPSL).

This sequence belongs to the ClpS family. Binds to the N-terminal domain of the chaperone ClpA.

Its function is as follows. Involved in the modulation of the specificity of the ClpAP-mediated ATP-dependent protein degradation. The sequence is that of ATP-dependent Clp protease adapter protein ClpS from Halorhodospira halophila (strain DSM 244 / SL1) (Ectothiorhodospira halophila (strain DSM 244 / SL1)).